Consider the following 2292-residue polypeptide: Protein Ycf2 (2292 aa).

Gly-1640–Ser-1647 serves as a coordination point for ATP.

This sequence belongs to the Ycf2 family.

Its subcellular location is the plastid. It is found in the chloroplast stroma. In terms of biological role, probable ATPase of unknown function. Its presence in a non-photosynthetic plant (Epifagus virginiana) and experiments in tobacco indicate that it has an essential function which is probably not related to photosynthesis. The polypeptide is Protein Ycf2 (Liriodendron tulipifera (Tuliptree)).